Here is a 107-residue protein sequence, read N- to C-terminus: Protein Asterix (107 aa).

Over residues 1–15 (MSHSHGNASSVNDPR) the composition is skewed to polar residues. Positions 1 to 25 (MSHSHGNASSVNDPRQPSAAKPYIP) are disordered. Residues 82-98 (ISMAMMFAIMGLVTNYL) form a helical membrane-spanning segment.

Belongs to the Asterix family.

The protein resides in the membrane. The polypeptide is Protein Asterix (Arabidopsis thaliana (Mouse-ear cress)).